The primary structure comprises 551 residues: Serine beta-lactamase-like protein LACTB, mitochondrial (551 aa).

Residues 1 to 113 constitute a mitochondrion transit peptide; the sequence is MYRLLSSVTA…RAIESSRDLL (113 aa). The tract at residues 69–101 is disordered; the sequence is PADPEASGTTELSHEQALSPGSPHTPAPPAARG. Ser162 acts as the Acyl-ester intermediate in catalysis. The interval 237 to 287 is disordered; the sequence is LKMVKGTPPPSDQEKELKEKGGKNNEKSDAPKAKVEQDSEARCRSAKPGKK. The segment covering 248 to 279 has biased composition (basic and acidic residues); that stretch reads DQEKELKEKGGKNNEKSDAPKAKVEQDSEARC. 2 positions are modified to N6-succinyllysine: Lys287 and Lys288. An N6-acetyllysine mark is found at Lys301 and Lys346.

This sequence belongs to the peptidase S12 family. Expressed predominantly in liver.

It is found in the mitochondrion. In terms of biological role, mitochondrial serine protease that acts as a regulator of mitochondrial lipid metabolism. Acts by decreasing protein levels of PISD, a mitochondrial enzyme that converts phosphatidylserine (PtdSer) to phosphatidylethanolamine (PtdEtn), thereby affecting mitochondrial lipid metabolism. It is unclear whether it acts directly by mediating proteolysis of PISD or by mediating proteolysis of another lipid metabolism protein. Acts as a tumor suppressor that has the ability to inhibit proliferation of multiple types of cancer cells: probably by promoting decreased levels of PISD, thereby affecting mitochondrial lipid metabolism. The sequence is that of Serine beta-lactamase-like protein LACTB, mitochondrial from Mus musculus (Mouse).